Consider the following 479-residue polypeptide: 5-hydroxytryptamine receptor 2B (479 aa).

Topologically, residues 1–55 (MASSYKMSEQSTISEHILQKTCDHLILTDRSGLKAESAAEEMKQTAENQGNTVHW) are extracellular. The helical transmembrane segment at 56–78 (AALLIFAVIIPTIGGNILVILAV) threads the bilayer. Over 79–89 (SLEKRLQYATN) the chain is Cytoplasmic. A helical membrane pass occupies residues 90-112 (YFLMSLAVADLLVGLFVMPIALL). Residues 113–128 (TIMFEATWPLPLALCP) lie on the Extracellular side of the membrane. C127 and C206 are disulfide-bonded. A helical membrane pass occupies residues 129-150 (AWLFLDVLFSTASIMHLCAISL). Ergotamine-binding residues include D134 and T139. The short motif at 151–153 (DRY) is the DRY motif; important for ligand-induced conformation changes element. Residues 151-170 (DRYIAIKKPIQANQCNSRTT) lie on the Cytoplasmic side of the membrane. A helical transmembrane segment spans residues 171–191 (AFVKITVVWLISIGIAIPVPI). Over 192-215 (KGIEADVVNAHNITCELTKDRFGS) the chain is Extracellular. N203 carries N-linked (GlcNAc...) asparagine glycosylation. L208 is an ergotamine binding site. The short motif at 211–214 (DRFG) is the [DE]RFG motif; may stabilize a conformation that preferentially activates signaling via beta-arrestin family members element. Residues 216-238 (FMLFGSLAAFFAPLTIMIVTYFL) form a helical membrane-spanning segment. Over 239–323 (TIHALRKKAY…TISNEQRASK (85 aa)) the chain is Cytoplasmic. A helical transmembrane segment spans residues 324 to 344 (VLGIVFLFFLLMWCPFFITNV). The Extracellular portion of the chain corresponds to 345–359 (TLALCDSCNQTTLKT). Residues C349 and C352 are joined by a disulfide bond. N353 carries N-linked (GlcNAc...) asparagine glycosylation. A helical membrane pass occupies residues 360-381 (LLQIFVWVGYVSSGVNPLIYTL). The short motif at 375–379 (NPLIY) is the NPxxY motif; important for ligand-induced conformation changes and signaling element. Residues 382–479 (FNKTFREAFG…DKVEDQVSYI (98 aa)) are Cytoplasmic-facing. C396 is lipidated: S-palmitoyl cysteine. Positions 477 to 479 (SYI) match the PDZ-binding motif.

The protein belongs to the G-protein coupled receptor 1 family. As to quaternary structure, interacts (via C-terminus) with MPDZ. Stomach fundus.

It localises to the cell membrane. The protein localises to the synapse. It is found in the synaptosome. Functionally, G-protein coupled receptor for 5-hydroxytryptamine (serotonin). Also functions as a receptor for various ergot alkaloid derivatives and psychoactive substances. Ligand binding causes a conformation change that triggers signaling via guanine nucleotide-binding proteins (G proteins) and modulates the activity of downstream effectors. HTR2B is coupled to G(q)/G(11) G alpha proteins and activates phospholipase C-beta, releasing diacylglycerol (DAG) and inositol 1,4,5-trisphosphate (IP3) second messengers that modulate the activity of phosphatidylinositol 3-kinase and promote the release of Ca(2+) ions from intracellular stores, respectively. Beta-arrestin family members inhibit signaling via G proteins and mediate activation of alternative signaling pathways. Plays a role in the regulation of dopamine and 5-hydroxytryptamine release, 5-hydroxytryptamine uptake and in the regulation of extracellular dopamine and 5-hydroxytryptamine levels, and thereby affects neural activity. May play a role in the perception of pain. Plays a role in the regulation of behavior, including impulsive behavior. Required for normal proliferation of embryonic cardiac myocytes and normal heart development. Protects cardiomyocytes against apoptosis. Plays a role in the adaptation of pulmonary arteries to chronic hypoxia. Plays a role in vasoconstriction. Required for normal osteoblast function and proliferation, and for maintaining normal bone density. Required for normal proliferation of the interstitial cells of Cajal in the intestine. The sequence is that of 5-hydroxytryptamine receptor 2B (Htr2b) from Rattus norvegicus (Rat).